A 590-amino-acid polypeptide reads, in one-letter code: CTP synthase (590 aa).

The amidoligase domain stretch occupies residues 1-281 (MPALRKHPQT…DAYVVRRLNL (281 aa)). Ser-23 lines the CTP pocket. Ser-23 is a UTP binding site. ATP contacts are provided by residues 24–29 (SLGKGL) and Asp-81. The Mg(2+) site is built by Asp-81 and Glu-155. CTP is bound by residues 162–164 (DIE), 202–207 (KTKPTQ), and Lys-238. UTP is bound by residues 202 to 207 (KTKPTQ) and Lys-238. In terms of domain architecture, Glutamine amidotransferase type-1 spans 306–554 (RIALVGKYID…IGAAIDYKAA (249 aa)). Gly-369 is a binding site for L-glutamine. Residue Cys-396 is the Nucleophile; for glutamine hydrolysis of the active site. L-glutamine is bound by residues 397–400 (LGLQ), Glu-419, and Arg-480. Active-site residues include His-527 and Glu-529.

Belongs to the CTP synthase family. In terms of assembly, homotetramer.

The enzyme catalyses UTP + L-glutamine + ATP + H2O = CTP + L-glutamate + ADP + phosphate + 2 H(+). The catalysed reaction is L-glutamine + H2O = L-glutamate + NH4(+). It carries out the reaction UTP + NH4(+) + ATP = CTP + ADP + phosphate + 2 H(+). It participates in pyrimidine metabolism; CTP biosynthesis via de novo pathway; CTP from UDP: step 2/2. Allosterically activated by GTP, when glutamine is the substrate; GTP has no effect on the reaction when ammonia is the substrate. The allosteric effector GTP functions by stabilizing the protein conformation that binds the tetrahedral intermediate(s) formed during glutamine hydrolysis. Inhibited by the product CTP, via allosteric rather than competitive inhibition. In terms of biological role, catalyzes the ATP-dependent amination of UTP to CTP with either L-glutamine or ammonia as the source of nitrogen. Regulates intracellular CTP levels through interactions with the four ribonucleotide triphosphates. The polypeptide is CTP synthase (Mycolicibacterium smegmatis (strain ATCC 700084 / mc(2)155) (Mycobacterium smegmatis)).